We begin with the raw amino-acid sequence, 540 residues long: MRVNNGLTPQELEAYGISDVHDIVYNPSYDLLYQEELDPSLTGYERGVLTNLGAVAVDTGIFTGRSPKDKYIVRDDTTRDTFWWADKGKGKNDNKPLSPETWQHLKGLVTRQLSGKRLFVVDAFCGANPDTRLSVRFITEVAWQAHFVKNMFIRPSDEELAGFKPDFIVMNGAKCTNPQWKEQGLNSENFVAFNLTERMQLIGGTWYGGEMKKGMFSMMNYLLPLKGIASMHCSANVGEKGDVAVFFGLSGTGKTTLSTDPKRRLIGDDEHGWDDDGVFNFEGGCYAKTIKLSKEAEPEIYNAIRRDALLENVTVREDGTIDFDDGSKTENTRVSYPIYHIDNIVKPVSKAGHATKVIFLTADAFGVLPPVSRLTADQTQYHFLSGFTAKLAGTERGITEPTPTFSACFGAAFLSLHPTQYAEVLVKRMQAAGAQAYLVNTGWNGTGKRISIKDTRAIIDAILNGSLDNAETFTLPMFNLAIPTELPGVDTKLLDPRNTYASPEQWQEKAETLAKLFIDNFDKYTDTPAGAALVAAGPKL.

Arginine 65 serves as a coordination point for substrate. Lysine 87 is subject to N6-acetyllysine. Residues tyrosine 207 and lysine 213 each coordinate substrate. ATP contacts are provided by residues lysine 213, histidine 232, and 248 to 256 (GLSGTGKTT). Mn(2+) is bound by residues lysine 213 and histidine 232. Residue aspartate 269 coordinates Mn(2+). Residues glutamate 297, arginine 333, 449-450 (RI), and threonine 455 contribute to the ATP site. A substrate-binding site is contributed by arginine 333. N6-acetyllysine is present on lysine 523.

Belongs to the phosphoenolpyruvate carboxykinase (ATP) family. Monomer. Mn(2+) is required as a cofactor.

It localises to the cytoplasm. It catalyses the reaction oxaloacetate + ATP = phosphoenolpyruvate + ADP + CO2. The protein operates within carbohydrate biosynthesis; gluconeogenesis. Functionally, involved in the gluconeogenesis. Catalyzes the conversion of oxaloacetate (OAA) to phosphoenolpyruvate (PEP) through direct phosphoryl transfer between the nucleoside triphosphate and OAA. The polypeptide is Phosphoenolpyruvate carboxykinase (ATP) (Escherichia coli O6:H1 (strain CFT073 / ATCC 700928 / UPEC)).